We begin with the raw amino-acid sequence, 465 residues long: Phospholipase A1-II 5 (465 aa).

The active-site Acyl-ester intermediate is the Ser-233. Active-site charge relay system residues include Ser-233, Asp-297, and His-336.

It belongs to the AB hydrolase superfamily. Lipase family.

It is found in the cytoplasm. Acylhydrolase that catalyzes the hydrolysis of phospholipids at the sn-1 position. The chain is Phospholipase A1-II 5 from Oryza sativa subsp. indica (Rice).